A 208-amino-acid chain; its full sequence is Ribosomal RNA large subunit methyltransferase E (208 aa).

Positions 62, 64, 82, 98, and 123 each coordinate S-adenosyl-L-methionine. Lys163 serves as the catalytic Proton acceptor.

Belongs to the class I-like SAM-binding methyltransferase superfamily. RNA methyltransferase RlmE family.

The protein localises to the cytoplasm. The catalysed reaction is uridine(2552) in 23S rRNA + S-adenosyl-L-methionine = 2'-O-methyluridine(2552) in 23S rRNA + S-adenosyl-L-homocysteine + H(+). Specifically methylates the uridine in position 2552 of 23S rRNA at the 2'-O position of the ribose in the fully assembled 50S ribosomal subunit. The chain is Ribosomal RNA large subunit methyltransferase E from Idiomarina loihiensis (strain ATCC BAA-735 / DSM 15497 / L2-TR).